Here is a 348-residue protein sequence, read N- to C-terminus: Rhodopsin (348 aa).

Position 1 is an N-acetylmethionine (Met-1). At 1-36 the chain is on the extracellular side; sequence MNGTEGPNFYVPFSNITGVVRSPFEQPQYYLAEPWQ. Asn-2 and Asn-15 each carry an N-linked (GlcNAc...) asparagine glycan. The chain crosses the membrane as a helical span at residues 37–61; sequence FSMLAAYMFLLIVLGFPINFLTLYV. Residues 62-73 lie on the Cytoplasmic side of the membrane; that stretch reads TVQHKKLRTPLN. A helical transmembrane segment spans residues 74-96; sequence YILLNLAVADLFMVFGGFTTTLY. Over 97-110 the chain is Extracellular; the sequence is TSLHGYFVFGPTGC. A disulfide bridge connects residues Cys-110 and Cys-187. A helical membrane pass occupies residues 111–133; the sequence is NLEGFFATLGGEIGLWSLVVLAI. The 'Ionic lock' involved in activated form stabilization motif lies at 134 to 136; that stretch reads ERY. Over 134–152 the chain is Cytoplasmic; it reads ERYVVVCKPMSNFRFGENH. A helical membrane pass occupies residues 153–173; that stretch reads AIMGVAFTWVMALACAAPPLV. Over 174–202 the chain is Extracellular; the sequence is GWSRYIPEGMQCSCGIDYYTLKPEVNNES. Residue Glu-201 coordinates Zn(2+). Residues 203 to 224 form a helical membrane-spanning segment; sequence FVIYMFVVHFTIPMIVIFFCYG. Topologically, residues 225–252 are cytoplasmic; that stretch reads QLVFTVKEAAAQQQESATTQKAEKEVTR. A helical transmembrane segment spans residues 253–274; sequence MVIIMVIFFLICWLPYASVAMY. The Extracellular portion of the chain corresponds to 275–286; it reads IFTHQGSNFGPI. Gln-279 contributes to the Zn(2+) binding site. Residues 287–308 traverse the membrane as a helical segment; that stretch reads FMTLPAFFAKTASIYNPIIYIM. Residue Lys-296 is modified to N6-(retinylidene)lysine. The Cytoplasmic portion of the chain corresponds to 309-348; that stretch reads MNKQFRNCMLTSLCCGKNPLGDDEASATASKTETSQVAPA. S-palmitoyl cysteine attachment occurs at residues Cys-322 and Cys-323. The interval 330–348 is interaction with SAG; sequence DDEASATASKTETSQVAPA. Residue Ser-334 is modified to Phosphoserine. Residue Thr-336 is modified to Phosphothreonine. Ser-338 carries the phosphoserine modification. Phosphothreonine occurs at positions 340 and 342. At Ser-343 the chain carries Phosphoserine.

It belongs to the G-protein coupled receptor 1 family. Opsin subfamily. In terms of assembly, homodimer. May form a complex composed of RHO, GRK1 and RCVRN in a Ca(2+)-dependent manner; RCVRN prevents the interaction between GRK1 and RHO. Interacts with GRK1. Interacts (phosphorylated form) with SAG. Interacts with GNAT1. Interacts with GNAT3. SAG and G-proteins compete for a common binding site. Interacts with PRCD; the interaction promotes PRCD stability. Forms a complex with ASAP1 and ARF4. Forms a complex with ASAP1, RAB11A, Rabin8/RAB3IP, ARF4 and RAB11FIP3; the complex regulates Golgi-to-cilia rhodopsin/RHO transport in photoreceptors. In terms of processing, phosphorylated on some or all of the serine and threonine residues present in the C-terminal region. Post-translationally, contains one covalently linked retinal chromophore. Upon light absorption, the covalently bound 11-cis-retinal is converted to all-trans-retinal. After hydrolysis of the Schiff base and release of the covalently bound all-trans-retinal, active rhodopsin is regenerated by binding of a fresh molecule of 11-cis-retinal.

It is found in the membrane. Its subcellular location is the cell projection. The protein resides in the cilium. It localises to the photoreceptor outer segment. Its function is as follows. Photoreceptor required for image-forming vision at low light intensity. Required for photoreceptor cell viability after birth. Light-induced isomerization of 11-cis to all-trans retinal triggers a conformational change that activates signaling via G-proteins. Subsequent receptor phosphorylation mediates displacement of the bound G-protein alpha subunit by the arrestin SAG and terminates signaling. The sequence is that of Rhodopsin (Rho) from Rattus norvegicus (Rat).